The sequence spans 117 residues: Immunoglobulin kappa variable 1-17 (117 aa).

Residues 1–22 (MDMRVPAQLLGLLLLWFPGARC) form the signal peptide. The framework-1 stretch occupies residues 23-45 (DIQMTQSPSSLSASVGDRVTITC). Residues 24-117 (IQMTQSPSSL…YYCLQHNSYP (94 aa)) enclose the Ig-like domain. Residues Cys45 and Cys110 are joined by a disulfide bond. Residues 46–56 (RASQGIRNDLG) are complementarity-determining-1. Residues 57 to 71 (WYQQKPGKAPKRLIY) are framework-2. The tract at residues 72–78 (AASSLQS) is complementarity-determining-2. The framework-3 stretch occupies residues 79–110 (GVPSRFSGSGSGTEFTLTISSLQPEDFATYYC). Residues 111 to 117 (LQHNSYP) form a complementarity-determining-3 region.

Immunoglobulins are composed of two identical heavy chains and two identical light chains; disulfide-linked.

It localises to the secreted. Its subcellular location is the cell membrane. V region of the variable domain of immunoglobulin light chains that participates in the antigen recognition. Immunoglobulins, also known as antibodies, are membrane-bound or secreted glycoproteins produced by B lymphocytes. In the recognition phase of humoral immunity, the membrane-bound immunoglobulins serve as receptors which, upon binding of a specific antigen, trigger the clonal expansion and differentiation of B lymphocytes into immunoglobulins-secreting plasma cells. Secreted immunoglobulins mediate the effector phase of humoral immunity, which results in the elimination of bound antigens. The antigen binding site is formed by the variable domain of one heavy chain, together with that of its associated light chain. Thus, each immunoglobulin has two antigen binding sites with remarkable affinity for a particular antigen. The variable domains are assembled by a process called V-(D)-J rearrangement and can then be subjected to somatic hypermutations which, after exposure to antigen and selection, allow affinity maturation for a particular antigen. The sequence is that of Immunoglobulin kappa variable 1-17 from Homo sapiens (Human).